Reading from the N-terminus, the 133-residue chain is Holo-[acyl-carrier-protein] synthase (133 aa).

Residues Asp8 and Glu57 each contribute to the Mg(2+) site.

Belongs to the P-Pant transferase superfamily. AcpS family. Mg(2+) is required as a cofactor.

It is found in the cytoplasm. It catalyses the reaction apo-[ACP] + CoA = holo-[ACP] + adenosine 3',5'-bisphosphate + H(+). In terms of biological role, transfers the 4'-phosphopantetheine moiety from coenzyme A to a Ser of acyl-carrier-protein. This chain is Holo-[acyl-carrier-protein] synthase, found in Bartonella bacilliformis (strain ATCC 35685 / KC583 / Herrer 020/F12,63).